An 85-amino-acid chain; its full sequence is UPF0386 protein Meso_1721 (85 aa).

It belongs to the UPF0386 family.

The sequence is that of UPF0386 protein Meso_1721 from Chelativorans sp. (strain BNC1).